The sequence spans 117 residues: Glycine cleavage system H-like protein (117 aa).

The Lipoyl-binding domain occupies 21–103 (IVKLGLSSQM…ESEGWFVVLQ (83 aa)). Lysine 62 is subject to N6-lipoyllysine.

This sequence belongs to the GcvH family. Requires (R)-lipoate as cofactor.

The polypeptide is Glycine cleavage system H-like protein (Chlamydia trachomatis serovar L2 (strain ATCC VR-902B / DSM 19102 / 434/Bu)).